The chain runs to 258 residues: Snake venom serine protease PTLE1 (258 aa).

A signal peptide spans 1 to 18 (MVLIRVLANLLILQLSYA). A propeptide spanning residues 19–24 (QKSSEL) is cleaved from the precursor. The region spanning 25 to 249 (VIGGDECNIN…YTDWIENIIA (225 aa)) is the Peptidase S1 domain. 6 cysteine pairs are disulfide-bonded: C31-C163, C50-C66, C98-C256, C142-C210, C174-C189, and C200-C225. An N-linked (GlcNAc...) asparagine glycan is attached at N44. The active-site Charge relay system is the H65. 2 N-linked (GlcNAc...) asparagine glycosylation sites follow: N79 and N103. D110 functions as the Charge relay system in the catalytic mechanism. The N-linked (GlcNAc...) asparagine glycan is linked to N121. The active-site Charge relay system is the S204.

The protein belongs to the peptidase S1 family. Snake venom subfamily. As to quaternary structure, monomer. Expressed by the venom gland.

The protein resides in the secreted. Functionally, snake venom serine protease that may act in the hemostasis system of the prey. This is Snake venom serine protease PTLE1 from Gloydius halys (Chinese water mocassin).